The chain runs to 311 residues: Heme A synthase (311 aa).

Over 1–6 the chain is Cytoplasmic; it reads MQRFIK. Residues 7–27 traverse the membrane as a helical segment; that stretch reads WLAVITSLDLLIVLLGGALVT. Residues 28 to 62 are Extracellular-facing; sequence KTGSGQGCGKSWPLCNGEFVPSNLSMETIIELSHR. Cysteine 35 and cysteine 42 are joined by a disulfide. Residue glutamate 58 is part of the active site. Histidine 61 is a heme o binding site. The chain crosses the membrane as a helical span at residues 63–83; sequence LTSGSAGILVTLLCILSWKYY. Topologically, residues 84–91 are cytoplasmic; the sequence is KHVRETKT. A helical membrane pass occupies residues 92-112; the sequence is LAILSFVFLVAQALMGAAAVV. At 113–121 the chain is on the extracellular side; that stretch reads WGQMPAVLA. The helical transmembrane segment at 122 to 142 threads the bilayer; sequence IHFGISLISFASVILLTCLIF. Histidine 123 provides a ligand contact to heme o. Topologically, residues 143–159 are cytoplasmic; the sequence is EIDQKFDARSLIMDKKM. Residues 160-180 form a helical membrane-spanning segment; that stretch reads KFHIYGVTIYCYLVVYTGALV. The Extracellular portion of the chain corresponds to 181–211; sequence RHERASLACPDFPLCSKNRPMPTQLHEWVQM. Cysteine 189 and cysteine 195 form a disulfide bridge. A helical transmembrane segment spans residues 212 to 232; the sequence is GHRLAAMLIFVWILYAMILAI. Histidine 213 contacts heme b. The Cytoplasmic segment spans residues 233-243; it reads RHYKQQPVVYW. Residues 244–264 form a helical membrane-spanning segment; the sequence is GWIISFILVTLQAIVGILVVF. Topologically, residues 265 to 271 are extracellular; the sequence is TNASLAM. Residues 272–292 traverse the membrane as a helical segment; the sequence is ALLHSLFISCLFAVLCYLVML. Position 275 (histidine 275) interacts with heme b. Topologically, residues 293–311 are cytoplasmic; the sequence is GTRSKVNAKEAASTSKQTK.

The protein belongs to the COX15/CtaA family. Type 1 subfamily. Interacts with CtaB. It depends on heme b as a cofactor.

Its subcellular location is the cell membrane. The catalysed reaction is Fe(II)-heme o + 2 A + H2O = Fe(II)-heme a + 2 AH2. The protein operates within porphyrin-containing compound metabolism; heme A biosynthesis; heme A from heme O: step 1/1. Catalyzes the conversion of heme O to heme A by two successive hydroxylations of the methyl group at C8. The first hydroxylation forms heme I, the second hydroxylation results in an unstable dihydroxymethyl group, which spontaneously dehydrates, resulting in the formyl group of heme A. This is Heme A synthase from Bacillus cereus (strain 03BB102).